A 90-amino-acid polypeptide reads, in one-letter code: DNA-directed RNA polymerase subunit Rpo11 (90 aa).

This sequence belongs to the archaeal Rpo11/eukaryotic RPB11/RPC19 RNA polymerase subunit family. Part of the RNA polymerase complex.

The protein resides in the cytoplasm. The enzyme catalyses RNA(n) + a ribonucleoside 5'-triphosphate = RNA(n+1) + diphosphate. DNA-dependent RNA polymerase (RNAP) catalyzes the transcription of DNA into RNA using the four ribonucleoside triphosphates as substrates. In Metallosphaera sedula (strain ATCC 51363 / DSM 5348 / JCM 9185 / NBRC 15509 / TH2), this protein is DNA-directed RNA polymerase subunit Rpo11.